We begin with the raw amino-acid sequence, 56 residues long: Large ribosomal subunit protein bL32c (56 aa).

It belongs to the bacterial ribosomal protein bL32 family.

The protein localises to the plastid. The protein resides in the chloroplast. The chain is Large ribosomal subunit protein bL32c from Huperzia lucidula (Shining clubmoss).